The chain runs to 803 residues: Na(+)/H(+) antiporter subunit A1 (803 aa).

A run of 19 helical transmembrane segments spans residues 1-21 (MSLLHIAVILPLIFALIIPIL), 30-50 (LGWFVLPIPVVLFIYFLSLIS), 79-99 (LSILFSLLITGIGSLVVLYSI), 117-137 (LFMGAMLGVVLSDNLIILYLF), 166-186 (LIITVFGGLSLLGGFILISLA), 208-228 (FIFAMVLIMLGAFTKSAQVPF), 265-285 (LFAISQGWIWTITLVGLITLF), 300-320 (ILAFSTVSQLGMIMSMLGIGA), 337-357 (FTAAVFHLVNHATFKGALFMI), 377-397 (LTIMPISFTITVITALSMAGI), 427-447 (LGIVFPILAIVGSIFTFVYSI), 472-492 (ILMLLSPIILAVLVVVFGLFP), 522-542 (GITPAFISTLIIWILGILLLL), 591-611 (LVIIFGMLIVVTIVTLLSVPF), 621-641 (IHIYEIAILILLIIAAFMVVI), 646-666 (LFSVIMLGVVGYSVSVLFVFF), 671-691 (LALTQFVVESISTALFLLCFY), 707-727 (LTNALISIGVGLVVIILGLIA), and 764-784 (MDTLFESSVLGIAGLGVYTMI).

It belongs to the CPA3 antiporters (TC 2.A.63) subunit A family. As to quaternary structure, may form a heterooligomeric complex that consists of seven subunits: mnhA1, mnhB1, mnhC1, mnhD1, mnhE1, mnhF1 and mnhG1.

The protein localises to the cell membrane. In terms of biological role, mnh complex is a Na(+)/H(+) antiporter involved in Na(+) excretion. The chain is Na(+)/H(+) antiporter subunit A1 (mnhA1) from Staphylococcus haemolyticus (strain JCSC1435).